Reading from the N-terminus, the 729-residue chain is MSKRRIEVGETYGSKAKKDPEASSSSAAAAAGTVAQILGGFVPNKQPPTMNPLTNTPYSQRYQNLYKKRIALPVFEYQADFMRLLSLHQCIVLVGETGSGKTTQIPQWCVDFAVSKGRKGVSCTQPRRVAAMSVAQRVSEEMDVKLGEEVGYSIRFEDCSTAKTLLKYMTDGMLLREAMSDPMLDQYQVILLDEAHERTLATDILMGVLKEVIRQRSDLKLVVMSATLDAGKFQQYFDNAPLMKVPGRTHPVEIFYTPEPERDYLEAAIRTVIQIHMCEEIEGDILMFLTGQEEIEEACKRIKREIDNLGSEIGELKCIPLYSTLPPNLQQRIFEPAPPPNANGAIGRKVVVSTNIAETSLTIDGVVFVIDPGFAKQKVYNPRIRVESLLVSPISKASAQQRSGRAGRTRPGKCFRLYTEKAFKNEMQDNTYPEILRSNLGTVVLQLKKLGIDDLVHFDFMDPPAPETLMRALELLNYLAALDDDGNLTDLGAVMSEFPLDPQLAKMLIASCQHNCSNEILSITAMLSVPQCFVRPNEAKKAADEAKMRFAHIDGDHLTLLNVYHAFKQSSEDPNWCYENFINFRSLKSADNVRQQLARIMDRFNLRRTSTEFTSKDYYVNIRKALVQGFFMQVAHLERTGYYLTIKDNQNVQLHPSTCLDHKPDWVIYNEFVLTTKNYIRTVTDVKPEWLCCLAPQYYDLNNFPQCEAKRQLELLQQRLETKQYQKGF.

Residues 1 to 25 (MSKRRIEVGETYGSKAKKDPEASSS) form a disordered region. Residues 82–246 (MRLLSLHQCI…FDNAPLMKVP (165 aa)) enclose the Helicase ATP-binding domain. Position 95-102 (95-102 (GETGSGKT)) interacts with ATP. The DEAH box signature appears at 193 to 196 (DEAH). The Helicase C-terminal domain occupies 271–451 (TVIQIHMCEE…TVVLQLKKLG (181 aa)).

It belongs to the DEAD box helicase family. DEAH subfamily. DDX15/PRP43 sub-subfamily.

The enzyme catalyses ATP + H2O = ADP + phosphate + H(+). In terms of biological role, RNA helicase involved in mRNA processing and antiviral innate immunity. Acts as an activator of the p38 MAPK cascade. This chain is ATP-dependent RNA helicase DHX15 homolog, found in Drosophila melanogaster (Fruit fly).